A 564-amino-acid polypeptide reads, in one-letter code: MFS-type transporter astH (564 aa).

N-linked (GlcNAc...) asparagine glycosylation occurs at Asn-23. The disordered stretch occupies residues 26–59 (KDTLVNCSPDPENPEKGQASSPRTQISVDDNEES). Over residues 43–53 (QASSPRTQISV) the composition is skewed to polar residues. 4 consecutive transmembrane segments (helical) span residues 69–89 (LAMIMISLCLAVFCLALDTTI), 106–126 (DVGWYGSAYLLTTSALTLSFG), 143–163 (GMFEIGSLICGATPNSLGLII), and 197–217 (GILGGLFGVASVVGPLIGGAF). An N-linked (GlcNAc...) asparagine glycan is attached at Asn-220. The next 6 helical transmembrane spans lie at 225 to 245 (WCFYINLPLGAVTGLFLILFF), 266 to 286 (LLGSLCFLPAIICVLLALQWG), 297 to 317 (IIALFTVFGVLLLAFAGVQWW), 339 to 359 (LFSFCLNASFIIFTYYLPMWF), 375 to 395 (LPMVLAVVIFSIISGGLVGAL), and 396 to 416 (GYYTPFMVIAPLIAAIGAGLL). N-linked (GlcNAc...) asparagine glycosylation is present at Asn-425. Helical transmembrane passes span 461–481 (TGTVIVMFMQTIGGAIFMSVG) and 537–557 (FYVAVAMAVLALPGALVMQWI).

The protein belongs to the major facilitator superfamily. TCR/Tet family.

The protein resides in the membrane. Its function is as follows. MFS-type transporter; part of the gene cluster that mediates the biosynthesis of astellolides, drimane-type sesquiterpene esters that show antimicrobial, anti-inflammatory, and anti-tumor activities. Seems not to be involved in astellolides translocation. The protein is MFS-type transporter astH of Aspergillus oryzae (strain ATCC 42149 / RIB 40) (Yellow koji mold).